Consider the following 328-residue polypeptide: Ketol-acid reductoisomerase (NADP(+)) (328 aa).

Residues 2-182 (AKIYRDVDAS…GATRAGVIET (181 aa)) form the KARI N-terminal Rossmann domain. NADP(+) contacts are provided by residues 25-28 (YGIQ), arginine 48, serine 53, and 83-86 (DMEQ). Histidine 108 is an active-site residue. Glycine 134 is an NADP(+) binding site. One can recognise a KARI C-terminal knotted domain in the interval 183–328 (TFAEETETDL…IEMRRLLFGQ (146 aa)). Mg(2+)-binding residues include aspartate 191, glutamate 195, glutamate 227, and glutamate 231. Residue serine 252 participates in substrate binding.

Belongs to the ketol-acid reductoisomerase family. The cofactor is Mg(2+).

The catalysed reaction is (2R)-2,3-dihydroxy-3-methylbutanoate + NADP(+) = (2S)-2-acetolactate + NADPH + H(+). It catalyses the reaction (2R,3R)-2,3-dihydroxy-3-methylpentanoate + NADP(+) = (S)-2-ethyl-2-hydroxy-3-oxobutanoate + NADPH + H(+). It functions in the pathway amino-acid biosynthesis; L-isoleucine biosynthesis; L-isoleucine from 2-oxobutanoate: step 2/4. Its pathway is amino-acid biosynthesis; L-valine biosynthesis; L-valine from pyruvate: step 2/4. Involved in the biosynthesis of branched-chain amino acids (BCAA). Catalyzes an alkyl-migration followed by a ketol-acid reduction of (S)-2-acetolactate (S2AL) to yield (R)-2,3-dihydroxy-isovalerate. In the isomerase reaction, S2AL is rearranged via a Mg-dependent methyl migration to produce 3-hydroxy-3-methyl-2-ketobutyrate (HMKB). In the reductase reaction, this 2-ketoacid undergoes a metal-dependent reduction by NADPH to yield (R)-2,3-dihydroxy-isovalerate. This Pyrobaculum arsenaticum (strain DSM 13514 / JCM 11321 / PZ6) protein is Ketol-acid reductoisomerase (NADP(+)).